A 370-amino-acid chain; its full sequence is Platelet-derived growth factor D (370 aa).

The N-terminal stretch at 1–23 (MQRLVLVSILLCANFSCYPDTFA) is a signal peptide. A CUB domain is found at 52-170 (REENIQVTSN…PGFKIYYSFV (119 aa)). The cysteines at positions 109 and 131 are disulfide-linked. Asparagine 276 is a glycosylation site (N-linked (GlcNAc...) asparagine). Intrachain disulfides connect cysteine 302–cysteine 360 and cysteine 306–cysteine 362.

This sequence belongs to the PDGF/VEGF growth factor family. Homodimer; disulfide-linked. Interacts with PDGFRB homodimers, and with heterodimers formed by PDGFRA and PDGFRB. Activated by proteolytic cleavage. Proteolytic removal of the N-terminal CUB domain releasing the core domain is necessary for unmasking the receptor-binding epitopes of the core domain. Cleavage after Arg-247 or Arg-249 by urokinase plasminogen activator gives rise to the active form. In terms of tissue distribution, expressed at high levels in developing heart, lung, kidney and some muscle derivatives. Moderately expressed in liver, brain and testis. In the kidney, localized to glomerular mesangial cells and vascular smooth muscle cells. Up-regulated in areas of renal fibrosis. In mice with unilateral ureteral obstruction, expressed in interstitial cells at day 4, with an increased to maximal expression at day 14.

The protein resides in the secreted. Growth factor that plays an essential role in the regulation of embryonic development, cell proliferation, cell migration, survival and chemotaxis. Potent mitogen for cells of mesenchymal origin. Plays an important role in wound healing. Has oncogenic potential and can induce tumor formation. Induces macrophage recruitment, increased interstitial pressure, and blood vessel maturation during angiogenesis. Can initiate events that lead to a mesangial proliferative glomerulonephritis, including influx of monocytes and macrophages and production of extracellular matrix. This chain is Platelet-derived growth factor D (Pdgfd), found in Mus musculus (Mouse).